Consider the following 73-residue polypeptide: Translation initiation factor IF-1 (73 aa).

Positions Met1 to Arg72 constitute an S1-like domain.

Belongs to the IF-1 family. Component of the 30S ribosomal translation pre-initiation complex which assembles on the 30S ribosome in the order IF-2 and IF-3, IF-1 and N-formylmethionyl-tRNA(fMet); mRNA recruitment can occur at any time during PIC assembly.

The protein resides in the cytoplasm. Its function is as follows. One of the essential components for the initiation of protein synthesis. Stabilizes the binding of IF-2 and IF-3 on the 30S subunit to which N-formylmethionyl-tRNA(fMet) subsequently binds. Helps modulate mRNA selection, yielding the 30S pre-initiation complex (PIC). Upon addition of the 50S ribosomal subunit IF-1, IF-2 and IF-3 are released leaving the mature 70S translation initiation complex. The protein is Translation initiation factor IF-1 of Gloeobacter violaceus (strain ATCC 29082 / PCC 7421).